The sequence spans 106 residues: MNTTSIKIKLKSFDHRQIDAAAKKIILLARELNIETRGPVPLPTSRAIYTILRSVHINKKSREQFESRTHKRLVILKVLPTNQKLVTEKISRSQLPAGVWIEIEVS.

This sequence belongs to the universal ribosomal protein uS10 family. Part of the 30S ribosomal subunit.

Its function is as follows. Involved in the binding of tRNA to the ribosomes. The protein is Small ribosomal subunit protein uS10 of Mesomycoplasma hyopneumoniae (strain 232) (Mycoplasma hyopneumoniae).